The chain runs to 287 residues: Nucleotide-binding protein MXAN_6564 (287 aa).

13–20 (GMSGSGKS) lines the ATP pocket. 62–65 (DVRE) serves as a coordination point for GTP.

The protein belongs to the RapZ-like family.

Functionally, displays ATPase and GTPase activities. This Myxococcus xanthus (strain DK1622) protein is Nucleotide-binding protein MXAN_6564.